We begin with the raw amino-acid sequence, 324 residues long: DNA-directed RNA polymerase subunit alpha (324 aa).

The segment at 1–230 is alpha N-terminal domain (alpha-NTD); it reads MQSSGLLKPR…EQLSVFADLE (230 aa). Residues 244 to 324 are alpha C-terminal domain (alpha-CTD); the sequence is VDPVLLRPVD…NWPPAGLEKA (81 aa).

Belongs to the RNA polymerase alpha chain family. As to quaternary structure, homodimer. The RNAP catalytic core consists of 2 alpha, 1 beta, 1 beta' and 1 omega subunit. When a sigma factor is associated with the core the holoenzyme is formed, which can initiate transcription.

It catalyses the reaction RNA(n) + a ribonucleoside 5'-triphosphate = RNA(n+1) + diphosphate. In terms of biological role, DNA-dependent RNA polymerase catalyzes the transcription of DNA into RNA using the four ribonucleoside triphosphates as substrates. The sequence is that of DNA-directed RNA polymerase subunit alpha from Dechloromonas aromatica (strain RCB).